A 492-amino-acid polypeptide reads, in one-letter code: MSKKYIIGIDGGSQSTKVVMYDLEGNVVCEGKGLLQPMHTPDADTAEHPDDDLWASLCFAGHDLMSQFAGNKEDIVGIGLGSIRCCRALLKADGTPAAPLISWQDARVTRPYEHTNPDVAYVTSFSGYLTHRLTGEFKDNIANYFGQWPVDYKSWAWSEDAAVMDKFNIPRHMLFDVQMPGTVLGHITPQAALATHFPAGLPVVCTTSDKPVEALGAGLLDDETAVISLGTYIALMMNGKALPKDPVAYWPIMSSIPQTLLYEGYGIRKGMWTVSWLRDMLGESLIQDARAQDLSPEDLLNKKASCVPPGCNGLMTVLDWLTNPWEPYKRGIMIGFDSSMDYAWIYRSILESVALTLKNNYDNMCNEMNHFAKHVIITGGGSNSDLFMQIFADVFNLPARRNAINGCASLGAAINTAVGLGLYPDYATAVDNMVRVKDIFIPIESNAKRYDAMNKGIFKDLTKHTDVILKKSYEVMHGELGNVDSIQSWSNA.

Belongs to the FGGY kinase family.

This is an uncharacterized protein from Escherichia coli (strain K12).